Consider the following 93-residue polypeptide: MTRSIWKGPFVDTCLFKQKKIRWRIWSRRSCILPQFVGCYAQIYNGKGFVGLKITEEMVGHKFGEFASTRKTSSLGKRALPSKTKIKPIKKVR.

It belongs to the universal ribosomal protein uS19 family.

The protein resides in the mitochondrion. This chain is Small ribosomal subunit protein uS19m (RPS19), found in Marchantia polymorpha (Common liverwort).